A 557-amino-acid chain; its full sequence is Urocanate hydratase (557 aa).

NAD(+) is bound by residues 53–54, Gln-131, 177–179, Glu-197, Arg-202, 243–244, 264–268, 274–275, and Tyr-323; these read GG, GMG, NA, QTSAH, and YL. Cys-411 is an active-site residue. Gly-493 is an NAD(+) binding site.

It belongs to the urocanase family. Requires NAD(+) as cofactor.

The protein resides in the cytoplasm. It carries out the reaction 4-imidazolone-5-propanoate = trans-urocanate + H2O. The protein operates within amino-acid degradation; L-histidine degradation into L-glutamate; N-formimidoyl-L-glutamate from L-histidine: step 2/3. In terms of biological role, catalyzes the conversion of urocanate to 4-imidazolone-5-propionate. This chain is Urocanate hydratase, found in Pseudomonas putida (strain GB-1).